A 258-amino-acid chain; its full sequence is Axonemal dynein light intermediate polypeptide 1 (258 aa).

Disordered regions lie at residues 19–60 (RNTE…CVPD) and 207–231 (VNEQ…EEKK). The segment covering 34–48 (SPQQPGPSGSAPQLP) has biased composition (low complexity). Positions 176–255 (MRKALQAEQG…LKAQLEGIIA (80 aa)) form a coiled coil.

This sequence belongs to the inner dynein arm light chain family. In terms of assembly, interacts with CFAP45. Interacts with DYNC1H1.

It is found in the cell projection. The protein resides in the cilium. Its subcellular location is the flagellum. It localises to the dynein axonemal particle. The protein localises to the cytoplasm. Its function is as follows. Involved in sperm flagellum assembly. The polypeptide is Axonemal dynein light intermediate polypeptide 1 (DNALI1) (Macaca fascicularis (Crab-eating macaque)).